The chain runs to 156 residues: MSRRHAAEKREVLPDAKYGDRVLTKFMNNLMIDGKKSVAERIVYNALDRVQGKLKREPIEVFHEALDNVKPSVEVRSRRVGGATYQVPVEVRPSRREALAIRWLIDASKKRNEHTMEERLAGELADAVNGRGTAVKKREDTHKMADANKAFSHYRW.

It belongs to the universal ribosomal protein uS7 family. In terms of assembly, part of the 30S ribosomal subunit. Contacts proteins S9 and S11.

In terms of biological role, one of the primary rRNA binding proteins, it binds directly to 16S rRNA where it nucleates assembly of the head domain of the 30S subunit. Is located at the subunit interface close to the decoding center, probably blocks exit of the E-site tRNA. This Paracoccus denitrificans (strain Pd 1222) protein is Small ribosomal subunit protein uS7.